Here is a 382-residue protein sequence, read N- to C-terminus: Na(+)/H(+) antiporter NhaA 2 (382 aa).

11 helical membrane passes run 7 to 27 (MVLS…LALL), 58 to 78 (LDLW…GLEL), 94 to 114 (SLPI…FIAI), 124 to 144 (GWAI…MLLG), 153 to 173 (LFLL…IALF), 178 to 198 (LSAL…LLNY), 199 to 219 (YHIT…IAML), 255 to 275 (NPWV…GIDI), 291 to 311 (IILG…FIAI), 327 to 347 (FYGI…IDGL), and 361 to 381 (LAIL…LKIV).

This sequence belongs to the NhaA Na(+)/H(+) (TC 2.A.33) antiporter family.

It is found in the cell inner membrane. The catalysed reaction is Na(+)(in) + 2 H(+)(out) = Na(+)(out) + 2 H(+)(in). Functionally, na(+)/H(+) antiporter that extrudes sodium in exchange for external protons. The polypeptide is Na(+)/H(+) antiporter NhaA 2 (Campylobacter jejuni (strain RM1221)).